The following is a 1096-amino-acid chain: Lysine-specific demethylase PHF2 (1096 aa).

The PHD-type zinc-finger motif lies at 5 to 56 (PVYCVCRLPYDVTRFMIECDACKDWFHGSCVGVEEEEAPDIDIYHCPNCEKT). Positions 193 and 246 each coordinate 2-oxoglutarate. One can recognise a JmjC domain in the interval 197–353 (FSDTRMSSFV…MQMRAYEVER (157 aa)). 2 residues coordinate Fe cation: histidine 249 and aspartate 251. 2-oxoglutarate is bound by residues tyrosine 259 and lysine 266. Fe cation is bound at residue tyrosine 321. Residue threonine 323 participates in 2-oxoglutarate binding. The interval 448–630 (TVRPEVNAAA…KSPLAGNKDK (183 aa)) is disordered. A Phosphoserine modification is found at serine 474. Threonine 479 is subject to Phosphothreonine. Residues 503–515 (SKIPKPPKSPKPP) are compositionally biased toward pro residues. At serine 536 the chain carries Phosphoserine. Basic and acidic residues-rich tracts occupy residues 545 to 560 (LEAH…EPPK) and 575 to 630 (DTVH…NKDK). 3 positions are modified to phosphoserine: serine 651, serine 677, and serine 701. A Glycyl lysine isopeptide (Lys-Gly) (interchain with G-Cter in SUMO2) cross-link involves residue lysine 707. The residue at position 716 (lysine 716) is an N6-acetyllysine. 3 disordered regions span residues 719-755 (LDSA…ESGS), 811-841 (WGTG…KRLL), and 871-1080 (YPSL…TAKQ). At tyrosine 724 the chain carries Phosphotyrosine. A compositionally biased stretch (basic and acidic residues) spans 725–753 (KSDDSSDEGSLHIDTDTKPGRNAKVKKES). Residues serine 726, serine 729, serine 730, and serine 734 each carry the phosphoserine modification. Phosphoserine is present on residues serine 873, serine 876, and serine 893. The span at 910–919 (RQDRPVREGT) shows a compositional bias: basic and acidic residues. The span at 943–953 (NRKKKNTKRKP) shows a compositional bias: basic residues. The segment covering 954-1010 (APNTASPSISTSASASTGTTSASTTPASTTPASTTPASTTPASTSTASSQASQEGSS) has biased composition (low complexity). 2 stretches are compositionally biased toward polar residues: residues 1031 to 1040 (GTFSGSQAGR) and 1054 to 1065 (RRPSASSPNNTA). Phosphoserine; by PKA is present on serine 1057.

The protein belongs to the JHDM1 histone demethylase family. JHDM1D subfamily. In terms of assembly, component of the PHF2-ARID5B complex, at least composed of PHF2 and ARID5B. Interacts with HNF4A and NR1H4. Interacts with RELA. Phosphorylated by PKA on specific serine residues, leading to the formation of an active lysine demethylase complex.

Its subcellular location is the nucleus. It localises to the nucleolus. The protein resides in the chromosome. It is found in the centromere. The protein localises to the kinetochore. It catalyses the reaction N(6),N(6)-dimethyl-L-lysyl(9)-[histone H3] + 2-oxoglutarate + O2 = N(6)-methyl-L-lysyl(9)-[histone H3] + formaldehyde + succinate + CO2. With respect to regulation, enzymatically inactive by itself, and become active following phosphorylation by PKA. In terms of biological role, lysine demethylase that demethylates both histones and non-histone proteins. Enzymatically inactive by itself, and becomes active following phosphorylation by PKA: forms a complex with ARID5B and mediates demethylation of methylated ARID5B. Demethylation of ARID5B leads to target the PHF2-ARID5B complex to target promoters, where PHF2 mediates demethylation of dimethylated 'Lys-9' of histone H3 (H3K9me2), followed by transcription activation of target genes. The PHF2-ARID5B complex acts as a coactivator of HNF4A in liver. PHF2 is recruited to trimethylated 'Lys-4' of histone H3 (H3K4me3) at rDNA promoters and promotes expression of rDNA. Involved in the activation of toll-like receptor 4 (TLR4)-target inflammatory genes in macrophages by catalyzing the demethylation of trimethylated histone H4 lysine 20 (H4K20me3) at the gene promoters. The polypeptide is Lysine-specific demethylase PHF2 (Phf2) (Mus musculus (Mouse)).